The sequence spans 391 residues: F-box only protein 5 (391 aa).

The region spanning 198–245 (AELFHRDFKHLLTKILRHLSAMDLINVISVSTTWRKILQKDNSAYNSY) is the F-box domain. The ZBR-type zinc-finger motif lies at 318-366 (CLKVCVDCSSPAKYDPYLHRATCTRESCKFDFCTLCSCKYHGSKCCQTS). Cys322, Cys325, Cys340, Cys345, Cys350, Cys353, His358, and Cys363 together coordinate Zn(2+). Positions 365 to 391 (TSKPRSYRVPSEPLPGSKKSKQNLRRL) are disordered. The span at 382–391 (KKSKQNLRRL) shows a compositional bias: basic residues.

In terms of assembly, part of a SCF (SKP1-cullin-F-box) protein ligase complex. Interacts with btrc. Interacts with skp1. Interacts with cdc20. Interacts with pin1; stabilizes fbxo5 by preventing its association with btrc in an isomerization-dependent pathway; this interaction is present during G2 phase and prevents fbxo5 degradation. Interacts with plk1. In terms of processing, proteolysed; proteolysis is induced by both cyclin B-cdk1 and cyclin A-cdk1/2 complex through probable phosphorylation. Proteolysis is inhibited by pin1 during G2.

The protein localises to the nucleus. It localises to the cytoplasm. Its subcellular location is the cytoskeleton. The protein resides in the spindle. It is found in the microtubule organizing center. The protein localises to the centrosome. It participates in protein modification; protein ubiquitination. Functionally, regulates progression through early mitosis by inhibiting the anaphase promoting complex/cyclosome (APC). Binds to the APC activators cdc20 to prevent APC activation. Can also bind directly to the APC to inhibit substrate-binding. Required to arrest unfertilized eggs at metaphase of meiosis II, by preventing their release from metaphase of meiosis II, through inhibition of APC-dependent cyclin B destruction leading to stabilization of cyclin B-cdk1 complex activity. The polypeptide is F-box only protein 5 (Xenopus tropicalis (Western clawed frog)).